We begin with the raw amino-acid sequence, 394 residues long: Elongation factor Tu (394 aa).

The tr-type G domain maps to 10-204 (KPHVNVGTIG…HLDSYIPEPE (195 aa)). The G1 stretch occupies residues 19 to 26 (GHVDHGKT). A GTP-binding site is contributed by 19–26 (GHVDHGKT). T26 is a binding site for Mg(2+). Residues 60–64 (GITIN) form a G2 region. A G3 region spans residues 81–84 (DCPG). GTP-binding positions include 81–85 (DCPGH) and 136–139 (NKCD). The G4 stretch occupies residues 136-139 (NKCD). The interval 174-176 (SAL) is G5.

The protein belongs to the TRAFAC class translation factor GTPase superfamily. Classic translation factor GTPase family. EF-Tu/EF-1A subfamily. In terms of assembly, monomer.

It is found in the cytoplasm. It carries out the reaction GTP + H2O = GDP + phosphate + H(+). GTP hydrolase that promotes the GTP-dependent binding of aminoacyl-tRNA to the A-site of ribosomes during protein biosynthesis. The protein is Elongation factor Tu of Haemophilus ducreyi (strain 35000HP / ATCC 700724).